The chain runs to 380 residues: tRNA-specific 2-thiouridylase MnmA (380 aa).

Residues 25–32 and Met-51 each bind ATP; that span reads AMSGGVDS. The active-site Nucleophile is Cys-119. Residues Cys-119 and Cys-216 are joined by a disulfide bond. Gly-143 is a binding site for ATP. Residues 166–168 are interaction with tRNA; sequence KDQ. The active-site Cysteine persulfide intermediate is Cys-216. The interaction with tRNA stretch occupies residues 320 to 321; the sequence is RY.

The protein belongs to the MnmA/TRMU family.

Its subcellular location is the cytoplasm. It catalyses the reaction S-sulfanyl-L-cysteinyl-[protein] + uridine(34) in tRNA + AH2 + ATP = 2-thiouridine(34) in tRNA + L-cysteinyl-[protein] + A + AMP + diphosphate + H(+). In terms of biological role, catalyzes the 2-thiolation of uridine at the wobble position (U34) of tRNA, leading to the formation of s(2)U34. This is tRNA-specific 2-thiouridylase MnmA from Deinococcus radiodurans (strain ATCC 13939 / DSM 20539 / JCM 16871 / CCUG 27074 / LMG 4051 / NBRC 15346 / NCIMB 9279 / VKM B-1422 / R1).